Consider the following 245-residue polypeptide: Epoxyqueuosine reductase QueH (245 aa).

The [4Fe-4S] cluster site is built by cysteine 52, cysteine 53, cysteine 131, and cysteine 134. Cysteine 214 and cysteine 216 are oxidised to a cystine.

Belongs to the QueH family.

The catalysed reaction is epoxyqueuosine(34) in tRNA + AH2 = queuosine(34) in tRNA + A + H2O. The protein operates within tRNA modification; tRNA-queuosine biosynthesis. Functionally, catalyzes the conversion of epoxyqueuosine (oQ) to queuosine (Q), which is a hypermodified base found in the wobble positions of tRNA(Asp), tRNA(Asn), tRNA(His) and tRNA(Tyr). This chain is Epoxyqueuosine reductase QueH, found in Haemophilus influenzae (strain ATCC 51907 / DSM 11121 / KW20 / Rd).